Reading from the N-terminus, the 399-residue chain is Centrosomal protein 43 (399 aa).

Positions 70–102 (DGRLVASLVAEFLQFFNLDFTLAVFHPETSTIQ) constitute a LisH domain. Disordered stretches follow at residues 142-216 (PASV…SKSS) and 236-311 (DARD…KRGS). A phosphoserine mark is found at serine 152 and serine 160. Residues 163-172 (GKSSANSTPS) are compositionally biased toward polar residues. Threonine 170 carries the phosphothreonine modification. Over residues 175–186 (PRYKGQGKKKTI) the composition is skewed to basic residues. Over residues 197–216 (SETSQSEPSVSLSESKSKSS) the composition is skewed to low complexity. The residue at position 202 (serine 202) is a Phosphoserine. Residues 246–256 (DGDDVEGDSFF) are compositionally biased toward acidic residues. Positions 259 to 275 (PIPKPEKTYGWRAEPRK) are enriched in basic and acidic residues. Over residues 290-302 (RSGLSSLAGAPSL) the composition is skewed to low complexity. Phosphoserine occurs at positions 301 and 326. The segment at 328–354 (GLGTGEDEDYADDFNSASHRSEKSELS) is disordered. At tyrosine 337 the chain carries Phosphotyrosine.

It belongs to the CEP43 family. Homodimer. Part of a ternary complex that contains CEP350, CEP43 and MAPRE1. Interacts directly with CEP350 and MAPRE1. Interacts with CEP19. Interacts (via N-terminus) with CEP350 (via C-terminus).

Its subcellular location is the cytoplasm. It localises to the cytoskeleton. It is found in the microtubule organizing center. The protein resides in the centrosome. The protein localises to the centriole. Its subcellular location is the cilium basal body. Its function is as follows. Required for anchoring microtubules to the centrosomes. Required for ciliation. This Mus musculus (Mouse) protein is Centrosomal protein 43.